A 242-amino-acid polypeptide reads, in one-letter code: Small ribosomal subunit protein uS2 (242 aa).

Belongs to the universal ribosomal protein uS2 family.

The sequence is that of Small ribosomal subunit protein uS2 from Colwellia psychrerythraea (strain 34H / ATCC BAA-681) (Vibrio psychroerythus).